Consider the following 424-residue polypeptide: Probable serine/threonine-protein kinase PBL6 (424 aa).

Positions 1-26 are disordered; it reads MGCFGRTPKSNKRSDTKTTKNNDFTP. Gly2 is lipidated: N-myristoyl glycine. Cys3 is lipidated: S-palmitoyl cysteine. Phosphothreonine is present on Thr87. The region spanning 98-377 is the Protein kinase domain; the sequence is FKSDCFLGEG…VVMALDHLAS (280 aa). ATP contacts are provided by residues 104–112 and Lys127; that span reads LGEGGFGKV. At Tyr172 the chain carries Phosphotyrosine. Asp225 functions as the Proton acceptor in the catalytic mechanism. Residues Ser229 and Ser259 each carry the phosphoserine modification. Phosphothreonine occurs at positions 260 and 265. Phosphotyrosine is present on Tyr273.

The protein belongs to the protein kinase superfamily. Ser/Thr protein kinase family.

It localises to the cell membrane. It carries out the reaction L-seryl-[protein] + ATP = O-phospho-L-seryl-[protein] + ADP + H(+). It catalyses the reaction L-threonyl-[protein] + ATP = O-phospho-L-threonyl-[protein] + ADP + H(+). May be involved in plant defense signaling. This chain is Probable serine/threonine-protein kinase PBL6, found in Arabidopsis thaliana (Mouse-ear cress).